The sequence spans 381 residues: Succinyl-diaminopimelate desuccinylase 1 (381 aa).

H70 contacts Zn(2+). D72 is an active-site residue. Zn(2+) is bound at residue D103. The active-site Proton acceptor is the E136. Residues E137, E165, and H354 each coordinate Zn(2+).

The protein belongs to the peptidase M20A family. DapE subfamily. Homodimer. Requires Zn(2+) as cofactor. Co(2+) serves as cofactor.

The catalysed reaction is N-succinyl-(2S,6S)-2,6-diaminopimelate + H2O = (2S,6S)-2,6-diaminopimelate + succinate. Its pathway is amino-acid biosynthesis; L-lysine biosynthesis via DAP pathway; LL-2,6-diaminopimelate from (S)-tetrahydrodipicolinate (succinylase route): step 3/3. Functionally, catalyzes the hydrolysis of N-succinyl-L,L-diaminopimelic acid (SDAP), forming succinate and LL-2,6-diaminopimelate (DAP), an intermediate involved in the bacterial biosynthesis of lysine and meso-diaminopimelic acid, an essential component of bacterial cell walls. This chain is Succinyl-diaminopimelate desuccinylase 1, found in Ruegeria sp. (strain TM1040) (Silicibacter sp.).